The following is an 829-amino-acid chain: FAST kinase domain-containing protein 1, mitochondrial (829 aa).

Lys346 bears the N6-acetyllysine mark. In terms of domain architecture, RAP spans 761–821 (IAIELLDVRA…KDARMDYLRE (61 aa)).

This sequence belongs to the FAST kinase family. In terms of tissue distribution, expression detected in spleen, testis, colon, heart, smooth muscle, kidney, brain, lung, liver, brown and white adipose tissue with highest expression in heart and brown adipose tissue.

The protein resides in the mitochondrion. Involved in the down-regulation of mitochondrial MT-ND3 mRNA levels which leads to decreased respiratory complex I abundance and activity. The chain is FAST kinase domain-containing protein 1, mitochondrial (Fastkd1) from Mus musculus (Mouse).